Reading from the N-terminus, the 494-residue chain is Ketol-acid reductoisomerase (NADP(+)) (494 aa).

Residues 14–208 (LDQLGRCRFM…GGHRAGCLES (195 aa)) enclose the KARI N-terminal Rossmann domain. NADP(+)-binding positions include 45–48 (CGAQ), Arg68, Arg76, Ser78, and 108–110 (DKQ). Residue His132 is part of the active site. Residue Gly158 participates in NADP(+) binding. 2 consecutive KARI C-terminal knotted domains span residues 209–344 (SFVA…NYPS) and 345–487 (TDVE…MTDM). Asp217, Glu221, Glu389, and Glu393 together coordinate Mg(2+). Ser414 is a substrate binding site.

It belongs to the ketol-acid reductoisomerase family. Mg(2+) is required as a cofactor.

It carries out the reaction (2R)-2,3-dihydroxy-3-methylbutanoate + NADP(+) = (2S)-2-acetolactate + NADPH + H(+). The enzyme catalyses (2R,3R)-2,3-dihydroxy-3-methylpentanoate + NADP(+) = (S)-2-ethyl-2-hydroxy-3-oxobutanoate + NADPH + H(+). It functions in the pathway amino-acid biosynthesis; L-isoleucine biosynthesis; L-isoleucine from 2-oxobutanoate: step 2/4. It participates in amino-acid biosynthesis; L-valine biosynthesis; L-valine from pyruvate: step 2/4. Its function is as follows. Involved in the biosynthesis of branched-chain amino acids (BCAA). Catalyzes an alkyl-migration followed by a ketol-acid reduction of (S)-2-acetolactate (S2AL) to yield (R)-2,3-dihydroxy-isovalerate. In the isomerase reaction, S2AL is rearranged via a Mg-dependent methyl migration to produce 3-hydroxy-3-methyl-2-ketobutyrate (HMKB). In the reductase reaction, this 2-ketoacid undergoes a metal-dependent reduction by NADPH to yield (R)-2,3-dihydroxy-isovalerate. The chain is Ketol-acid reductoisomerase (NADP(+)) from Vibrio vulnificus (strain CMCP6).